Consider the following 61-residue polypeptide: Small ribosomal subunit protein uS14 (61 aa).

Zn(2+)-binding residues include Cys24, Cys27, Cys40, and Cys43.

It belongs to the universal ribosomal protein uS14 family. Zinc-binding uS14 subfamily. As to quaternary structure, part of the 30S ribosomal subunit. Contacts proteins S3 and S10. The cofactor is Zn(2+).

Binds 16S rRNA, required for the assembly of 30S particles and may also be responsible for determining the conformation of the 16S rRNA at the A site. This is Small ribosomal subunit protein uS14 from Thermosipho melanesiensis (strain DSM 12029 / CIP 104789 / BI429).